Consider the following 449-residue polypeptide: MARRARRPRGRFYAFRRGRWHNLKRLRRRYKFRHRRRQRYRRRAFRKAFHNPRPGTYSVRLPNPQSTMTIRFQGIIFLTEGLILPKNSTAGGYADHLYGARVAKISVNLKEFLLASMNLTYVSKIGGPIAGELIADGSQSQAAQNWPNCWLPLDNNVPSATPSAWWRWALMMMQPTDSCRFFNHPKQMTLQDMGRMFGGWHLFRHIETRFQLLATKNEGSFSPVASLLSQGEYLTRRDDVKYSSDHQNRWRKGEQPMTGGIAYATGKMRPDEQQYPAMPPDPPIITATTAQGTQVRCMNSTQAWWSWDTYMSFATLTALGAQWSFPPGQRSVSRRSFNHHKARGAGDPKGQRWHTLVPLGTETITDSYMSAPASELDTNFFTLYVAQGTNKSQQYKFGTATYALKEPVMKSDAWAVVRVQSVWQLGNRQRPYPWDVNWANSTMYWGSQP.

The DNA-binding stretch occupies residues 1–43; that stretch reads MARRARRPRGRFYAFRRGRWHNLKRLRRRYKFRHRRRQRYRRR. A nuclear localization signals region spans residues 6-47; that stretch reads RRPRGRFYAFRRGRWHNLKRLRRRYKFRHRRRQRYRRRAFRK.

Belongs to the gyrovirus capsid protein family. As to quaternary structure, homomultimer (Potential). Interacts with Rep; this interaction relocates Rep into the nucleus.

It is found in the host nucleus. The protein resides in the virion. Functionally, self-assembles to form the virion icosahedral capsid with a T=1 symmetry. This very small capsid (25 nm in diameter) allows the virus to be very stable in the environment and resistant to some disinfectants, including detergents. Essential for the initial attachment to host receptors. After attachment, the virus is endocytosed and traffics to the nucleus. The capsid protein binds and transports the viral genome and Rep across the nuclear envelope. The chain is Capsid protein (VP1) from Chicken anemia virus (isolate USA CIA-1) (CAV).